A 214-amino-acid chain; its full sequence is Lazarillo protein (214 aa).

Residues 1 to 21 form the signal peptide; the sequence is MIRRGLLSVTAALVLLSVSCS. Residues asparagine 38, asparagine 74, asparagine 84, asparagine 90, asparagine 130, asparagine 158, and asparagine 161 are each glycosylated (N-linked (GlcNAc...) asparagine). Alanine 192 is lipidated: GPI-anchor amidated alanine. The propeptide at 193–214 is removed in mature form; that stretch reads GAEHVVGAMLSVAIASLFALLH.

This sequence belongs to the calycin superfamily. Lipocalin family. In terms of processing, N-glycosylated. Post-translationally, contains disulfide bonds. As to expression, expressed by a subset of neuroblasts, ganglion mother cells and neurons of the CNS; by all sensory neurons of the PNS.

It localises to the cell membrane. In terms of biological role, putative role in axonal outgrowth and guidance, required for the navigation of identified commissural neurons. Could be a receptor the midline morphogen. This is Lazarillo protein from Schistocerca americana (American grasshopper).